We begin with the raw amino-acid sequence, 529 residues long: Bifunctional purine biosynthesis protein PurH (529 aa).

The 148-residue stretch at 1–148 (MQQRRPVRRA…KNHKDVAIVV (148 aa)) folds into the MGS-like domain.

It belongs to the PurH family.

The catalysed reaction is (6R)-10-formyltetrahydrofolate + 5-amino-1-(5-phospho-beta-D-ribosyl)imidazole-4-carboxamide = 5-formamido-1-(5-phospho-D-ribosyl)imidazole-4-carboxamide + (6S)-5,6,7,8-tetrahydrofolate. It carries out the reaction IMP + H2O = 5-formamido-1-(5-phospho-D-ribosyl)imidazole-4-carboxamide. The protein operates within purine metabolism; IMP biosynthesis via de novo pathway; 5-formamido-1-(5-phospho-D-ribosyl)imidazole-4-carboxamide from 5-amino-1-(5-phospho-D-ribosyl)imidazole-4-carboxamide (10-formyl THF route): step 1/1. It participates in purine metabolism; IMP biosynthesis via de novo pathway; IMP from 5-formamido-1-(5-phospho-D-ribosyl)imidazole-4-carboxamide: step 1/1. In Salmonella newport (strain SL254), this protein is Bifunctional purine biosynthesis protein PurH.